The primary structure comprises 401 residues: Protein nanos (401 aa).

Residues 181–207 are disordered; the sequence is LGRMSYGSAPPQVQMPPQQQHQQQQGL. Over residues 190-205 the composition is skewed to low complexity; it reads PPQVQMPPQQQHQQQQ. The segment at 318-372 adopts a Nanos-type zinc-finger fold; the sequence is HCVFCENNNEPEAVINSHSVRDNFNRVLCPKLRTYVCPICGASGDSAHTIKYCPK. Zn(2+) is bound by residues Cys319, Cys322, His335, Cys346, Cys354, Cys357, His365, and Cys370. 2 consecutive short sequence motifs (C2HC) follow at residues 319–346 and 354–370; these read CVFCENNNEPEAVINSHSVRDNFNRVLC and CPICGASGDSAHTIKYC.

This sequence belongs to the nanos family. In terms of assembly, interacts with pum and brat. Interacts with cup. Interacts with mei-P26; possibly involved in regulation of brat levels. Interacts with wh; may be involved in mei-P26-dependent derepression of the BMP signaling pathway. Acts via the formation of a quaternary complex composed of pum, nanos, brat and the 3'-UTR mRNA of hb. Binds RNA with no specificity. Posterior part of the embryo. While the transcript is present throughout the embryo, nanos translation is controlled by smg, and the protein is found in pole plasm and pole cells. In the female ovary expressed in germline stem cells, precystoblasts and in maturing cystoblasts; in early cystoblasts expression is post-transcriptionally repressed by bam in a 3'UTR-dependent manner.

It localises to the cytoplasm. The protein resides in the cytoplasmic ribonucleoprotein granule. Maternal RNA-binding protein that is required for germ cells proliferation and self-renewal. Acts by forming a complex with pum and brat that regulates translation and mRNA stability. The complex binds to the Nanos Response Element (NRE), a 16 bp sequence in the hb mRNA 3'-UTR and prevents its translation. Controls posterior development. Rescuing factor for the abdominal defect of posterior group mutants. The other posterior group genes are not required for nanos function but rather play a role in localization or distribution of nanos protein. This is Protein nanos from Drosophila melanogaster (Fruit fly).